The sequence spans 513 residues: ATP synthase subunit alpha (513 aa).

An ATP-binding site is contributed by 169–176; that stretch reads GDRQTGKT.

Belongs to the ATPase alpha/beta chains family. As to quaternary structure, F-type ATPases have 2 components, CF(1) - the catalytic core - and CF(0) - the membrane proton channel. CF(1) has five subunits: alpha(3), beta(3), gamma(1), delta(1), epsilon(1). CF(0) has three main subunits: a(1), b(2) and c(9-12). The alpha and beta chains form an alternating ring which encloses part of the gamma chain. CF(1) is attached to CF(0) by a central stalk formed by the gamma and epsilon chains, while a peripheral stalk is formed by the delta and b chains.

The protein resides in the cell inner membrane. The catalysed reaction is ATP + H2O + 4 H(+)(in) = ADP + phosphate + 5 H(+)(out). Produces ATP from ADP in the presence of a proton gradient across the membrane. The alpha chain is a regulatory subunit. The protein is ATP synthase subunit alpha of Pasteurella multocida (strain Pm70).